The chain runs to 1528 residues: Multidrug resistance-associated protein 1 (1528 aa).

Residues 1–33 (MALRSFCSADGSDPLWDWNVTWHTSNPDFTKCF) are Extracellular-facing. The N-linked (GlcNAc...) asparagine glycan is linked to Asn-19. The helical transmembrane segment at 34–54 (QNTVLTWVPCFYLWSCFPLYF) threads the bilayer. Residues 55 to 74 (FYLSRHDRGYIQMTHLNKTK) are Cytoplasmic-facing. The helical transmembrane segment at 75–95 (TALGFFLWIICWADLFYSFWE) threads the bilayer. The Extracellular portion of the chain corresponds to 96–100 (RSQGV). A helical membrane pass occupies residues 101-121 (LRAPVLLVSPTLLGITMLLAT). The Cytoplasmic segment spans residues 122–133 (FLIQLERRKGVQ). Residues 134–154 (SSGIMLTFWLVALLCALAILR) traverse the membrane as a helical segment. Residues 155 to 172 (SKIISALKKDAHVDVFRD) lie on the Extracellular side of the membrane. The chain crosses the membrane as a helical span at residues 173–193 (STFYLYFTLVLVQLVLSCFSD). Residues 194-317 (CSPLFSETVH…KDREPSLFKV (124 aa)) lie on the Cytoplasmic side of the membrane. Tyr-277 carries the post-translational modification Phosphotyrosine. Ser-290 carries the phosphoserine modification. The helical transmembrane segment at 318 to 338 (LYKTFGPYFLMSFLYKALHDL) threads the bilayer. The 284-residue stretch at 326–609 (FLMSFLYKAL…LPMVISSIVQ (284 aa)) folds into the ABC transmembrane type-1 1 domain. At 339 to 364 (MMFAGPKILELIINFVNDREAPDWQG) the chain is on the extracellular side. Residues 365–385 (YFYTALLFVSACLQTLALHQY) form a helical membrane-spanning segment. At 386 to 441 (FHICFVSGMRIKTAVVGAVYRKALLITNAARKSSTVGEIVNLMSVDAQRFMDLATY) the chain is on the cytoplasmic side. A helical transmembrane segment spans residues 442 to 462 (INMIWSAPLQVILALYFLWLS). Over 463–465 (LGP) the chain is Extracellular. Residues 466–486 (SVLAGVAVMILMVPLNAVMAM) traverse the membrane as a helical segment. Residues 487 to 548 (KTKTYQVAHM…VLKKSAYLAA (62 aa)) are Cytoplasmic-facing. Position 504 is an N6-succinyllysine (Lys-504). Residues 549 to 569 (VGTFTWVCTPFLVALSTFAVF) traverse the membrane as a helical segment. Residues 570–591 (VTVDERNILDAKKAFVSLALFN) are Extracellular-facing. Residues 592 to 612 (ILRFPLNILPMVISSIVQASV) form a helical membrane-spanning segment. Residues 613–963 (SLKRLRIFLS…VQLSVYWNYM (351 aa)) lie on the Cytoplasmic side of the membrane. One can recognise an ABC transporter 1 domain in the interval 644 to 868 (ITVKNATFTW…DGAFAEFLRT (225 aa)). ATP is bound at residue 678–685 (GQVGCGKS). Disordered stretches follow at residues 876–895 (LASEDDSVSGSGKESKPVEN) and 909–929 (RHLSNSSSHSGDTSQQHSSIA). Ser-878, Ser-882, Ser-912, and Ser-927 each carry phosphoserine. The segment covering 910–929 (HLSNSSSHSGDTSQQHSSIA) has biased composition (polar residues). A helical transmembrane segment spans residues 964–984 (KAIGLFITFLSIFLFLCNHVS). One can recognise an ABC transmembrane type-1 2 domain in the interval 971–1253 (TFLSIFLFLC…LVRMSSEMET (283 aa)). Residues 985–1022 (ALASNYWLSLWTDDPPVVNGTQANRNFRLSVYGALGIL) lie on the Extracellular side of the membrane. The N-linked (GlcNAc...) asparagine glycan is linked to Asn-1003. Residues 1023–1043 (QGAAIFGYSMAVSIGGIFASR) traverse the membrane as a helical segment. The Cytoplasmic segment spans residues 1044 to 1086 (RLHLDLLYNVLRSPMSFFERTPSGNLVNRFSKELDTVDSMIPQ). The helical transmembrane segment at 1087 to 1107 (VIKMFMGSLFSVIGAVIIILL) threads the bilayer. A topological domain (extracellular) is located at residue Ala-1108. A helical membrane pass occupies residues 1109-1129 (TPIAAVIIPPLGLVYFFVQRF). At 1130–1200 (YVASSRQLKR…VANRWLAVRL (71 aa)) the chain is on the cytoplasmic side. A helical membrane pass occupies residues 1201 to 1221 (ECVGNCIVLFAALFAVISRHS). Residues 1222-1223 (LS) are Extracellular-facing. Residues 1224 to 1244 (AGLVGLSVSYSLQITAYLNWL) form a helical membrane-spanning segment. Over 1245–1528 (VRMSSEMETN…YSMAKDAGLV (284 aa)) the chain is Cytoplasmic. Positions 1290–1524 (VEFRDYCLRY…RGIFYSMAKD (235 aa)) constitute an ABC transporter 2 domain. ATP is bound at residue 1324–1331 (GRTGAGKS).

Belongs to the ABC transporter superfamily. ABCC family. Conjugate transporter (TC 3.A.1.208) subfamily.

The protein resides in the cell membrane. It localises to the basolateral cell membrane. The catalysed reaction is ATP + H2O + xenobioticSide 1 = ADP + phosphate + xenobioticSide 2.. The enzyme catalyses an S-substituted glutathione(in) + ATP + H2O = an S-substituted glutathione(out) + ADP + phosphate + H(+). It catalyses the reaction leukotriene C4(in) + ATP + H2O = leukotriene C4(out) + ADP + phosphate + H(+). It carries out the reaction sphing-4-enine 1-phosphate(in) + ATP + H2O = sphing-4-enine 1-phosphate(out) + ADP + phosphate + H(+). The catalysed reaction is 17beta-estradiol 17-O-(beta-D-glucuronate)(in) + ATP + H2O = 17beta-estradiol 17-O-(beta-D-glucuronate)(out) + ADP + phosphate + H(+). The enzyme catalyses vincristine(in) + ATP + H2O = vincristine(out) + ADP + phosphate + H(+). It catalyses the reaction daunorubicin(in) + ATP + H2O = daunorubicin(out) + ADP + phosphate + H(+). It carries out the reaction 2',3'-cGAMP(in) + ATP + H2O = 2',3'-cGAMP(out) + ADP + phosphate + H(+). The catalysed reaction is S-[(2E,6E,10E)-geranylgeranyl]-L-glutathione(in) + ATP + H2O = S-[(2E,6E,10E)-geranylgeranyl]-L-glutathione(out) + ADP + phosphate + H(+). The enzyme catalyses prostaglandin A2-S-(R)-glutathione(in) + ATP + H2O = prostaglandin A2-S-(R)-glutathione(out) + ADP + phosphate + H(+). It catalyses the reaction prostaglandin A2-S-(S)-glutathione(in) + ATP + H2O = prostaglandin A2-S-(S)-glutathione(out) + ADP + phosphate + H(+). Its activity is regulated as follows. MK 571 inhibits sphingosine 1-phosphate and leukotriene C4 export. Mediates export of organic anions and drugs from the cytoplasm. Mediates ATP-dependent transport of glutathione and glutathione conjugates, leukotriene C4, estradiol-17-beta-o-glucuronide, methotrexate, antiviral drugs and other xenobiotics. Confers resistance to anticancer drugs by decreasing accumulation of drugs in cells, and by mediating ATP- and GSH-dependent drug export. Hydrolyzes ATP with low efficiency. Catalyzes the export of sphingosine 1-phosphate from mast cells independently of their degranulation. Participates in inflammatory response by allowing export of leukotriene C4 from leukotriene C4-synthesizing cells. Mediates ATP-dependent, GSH-independent cyclic GMP-AMP (cGAMP) export. Thus, by limiting intracellular cGAMP concentrations negatively regulates the cGAS-STING pathway. Exports S-geranylgeranyl-glutathione (GGG) in lymphoid cells and stromal compartments of lymphoid organs. ABCC1 (via extracellular transport) with GGT5 (via GGG catabolism) establish GGG gradients within lymphoid tissues to position P2RY8-positive lymphocytes at germinal centers in lymphoid follicles and restrict their chemotactic transmigration from blood vessels to the bone marrow parenchyma. Mediates basolateral export of GSH-conjugated R- and S-prostaglandin A2 diastereomers in polarized epithelial cells. The sequence is that of Multidrug resistance-associated protein 1 from Mus musculus (Mouse).